Here is a 198-residue protein sequence, read N- to C-terminus: MGDTMEIQLPDIEEIKLEDVLIKRRSVREYCSSPLTLRELSHILFAAYGVTDERGFKTVPSAGATYPLEIYVNVRDVVGVEEGVYKYIPERHSIVRILDEEVGHELALAALKQMFIAIAPIVLIIAANYERTTRVYGDRGFRYVHMEVGHVAQNVYLMATSLGLGTVSVGAFYDNEIREILKIKEYPLLLMPVGRKIE.

The protein belongs to the nitroreductase family. FMN is required as a cofactor.

The chain is Putative nitroreductase MJ1384 from Methanocaldococcus jannaschii (strain ATCC 43067 / DSM 2661 / JAL-1 / JCM 10045 / NBRC 100440) (Methanococcus jannaschii).